A 320-amino-acid polypeptide reads, in one-letter code: Olfactory receptor 13C8 (320 aa).

Over 1–25 (MERTNDSTSTEFFLVGLSAHPKLQT) the chain is Extracellular. An N-linked (GlcNAc...) asparagine glycan is attached at asparagine 5. Residues 26–46 (VFFVLILWMYLMILLGNGVLI) traverse the membrane as a helical segment. The Cytoplasmic segment spans residues 47–54 (SVIIFDSH). Residues 55-75 (LHTPMYFFLCNLSFLDVCYTS) traverse the membrane as a helical segment. Residues 76–99 (SSVPLILASFLAVKKKVSFSGCMV) are Extracellular-facing. Residues cysteine 97 and cysteine 189 are joined by a disulfide bond. The helical transmembrane segment at 100–120 (QMFISFAMGATECMILGTMAL) threads the bilayer. At 121 to 139 (DRYVAICYPLRYPVIMSKG) the chain is on the cytoplasmic side. A helical transmembrane segment spans residues 140-160 (AYVAMAAGSWVTGLVDSVVQT). Residues 161 to 197 (AFAMQLPFCANNVIKHFVCEILAILKLACADISINVI) are Extracellular-facing. A helical transmembrane segment spans residues 198 to 217 (SMTGSNLIVLVIPLLVISIS). Residues 218–237 (YIFIVATILRIPSTEGKHKA) are Cytoplasmic-facing. Residues 238–258 (FSTCSAHLTVVIIFYGTIFFM) form a helical membrane-spanning segment. Over 259–277 (YAKPESKASVDSGNEDIIE) the chain is Extracellular. The chain crosses the membrane as a helical span at residues 278–298 (ALISLFYGVMTPMLNPLIYSL). Residues 299 to 320 (RNKDVKAAVKNILCRKNFSDGK) are Cytoplasmic-facing.

Belongs to the G-protein coupled receptor 1 family.

The protein resides in the cell membrane. Functionally, odorant receptor. The sequence is that of Olfactory receptor 13C8 (OR13C8) from Homo sapiens (Human).